A 212-amino-acid polypeptide reads, in one-letter code: Ras-related protein RABC1 (212 aa).

G2 is subject to N-acetylglycine. G20 to S27 contacts GTP. Residues L41–F49 carry the Effector region motif. Residues D67–Q71, N127–D130, and S157–A158 each bind GTP. The tract at residues T182–S212 is disordered. A compositionally biased stretch (low complexity) spans T201 to S212. 2 S-geranylgeranyl cysteine lipidation sites follow: C209 and C210.

The protein belongs to the small GTPase superfamily. Rab family.

The protein resides in the cell membrane. Its function is as follows. Intracellular vesicle trafficking and protein transport. The chain is Ras-related protein RABC1 (RABC1) from Arabidopsis thaliana (Mouse-ear cress).